The primary structure comprises 210 residues: Large ribosomal subunit protein uL3 (210 aa).

Positions 126–152 (HGFRGGPKTHGQSDRHRAPGSIGAGTT) are disordered.

Belongs to the universal ribosomal protein uL3 family. In terms of assembly, part of the 50S ribosomal subunit. Forms a cluster with proteins L14 and L19.

One of the primary rRNA binding proteins, it binds directly near the 3'-end of the 23S rRNA, where it nucleates assembly of the 50S subunit. The polypeptide is Large ribosomal subunit protein uL3 (Chloroflexus aurantiacus (strain ATCC 29366 / DSM 635 / J-10-fl)).